Consider the following 238-residue polypeptide: Probable transcriptional regulatory protein SSP2054 (238 aa).

Belongs to the TACO1 family. YeeN subfamily.

The protein resides in the cytoplasm. The chain is Probable transcriptional regulatory protein SSP2054 from Staphylococcus saprophyticus subsp. saprophyticus (strain ATCC 15305 / DSM 20229 / NCIMB 8711 / NCTC 7292 / S-41).